Reading from the N-terminus, the 116-residue chain is MIDEELQQWFSHTEMLIAELLEDGTNDEVYHTIEHHFASSDFDLLEKAAIAAFKLGLEIEEPEEAELENGDKVFAFDIATEQMLDVNLIKKETQAMFELAKQCGVDYDGWGTYFEE.

Belongs to the RraB family. Interacts with the C-terminal region of Rne.

The protein localises to the cytoplasm. Globally modulates RNA abundance by binding to RNase E (Rne) and regulating its endonucleolytic activity. Can modulate Rne action in a substrate-dependent manner by altering the composition of the degradosome. In Colwellia psychrerythraea (strain 34H / ATCC BAA-681) (Vibrio psychroerythus), this protein is Regulator of ribonuclease activity B.